The chain runs to 250 residues: Putative B3 domain-containing protein At4g03170 (250 aa).

The segment covering 1–12 has biased composition (polar residues); the sequence is MANSTGKPTSST. The segment at 1–90 is disordered; sequence MANSTGKPTS…EKNQPKRFKK (90 aa). Residues 34 to 56 show a composition bias toward acidic residues; it reads DREEDIDDEDDIDDEVIDDEDYE. The segment covering 72-84 has biased composition (basic and acidic residues); sequence QSREREEETEKNQ. The TF-B3 DNA-binding region spans 137-245; sequence KKQLMSSDVD…KLCFAIHYVK (109 aa).

It is found in the nucleus. The sequence is that of Putative B3 domain-containing protein At4g03170 from Arabidopsis thaliana (Mouse-ear cress).